Here is a 769-residue protein sequence, read N- to C-terminus: Serine protease HtrA-like (769 aa).

Residues 1–20 (MDIGKKHVIPKSQYRRKRRE) show a composition bias toward basic residues. 2 disordered regions span residues 1–287 (MDIG…DKDN) and 324–390 (EDKH…KGRA). Basic and acidic residues-rich tracts occupy residues 21 to 64 (FFHN…ERFK) and 71 to 108 (LEQRNRDVNENKAEESKSNQDSKSAYNRDHYLTDDVSK). The segment covering 126-137 (YEQNSEATLSTK) has biased composition (polar residues). The segment covering 138-186 (STDKVESTEMRKLSSDKNKVGHEEQHVLSKPSEHDKETRIDSESSRTDS) has biased composition (basic and acidic residues). Over residues 247–262 (QQSQNEQTKTYTYGDS) the composition is skewed to polar residues. Positions 264–287 (QNDKSNHENDLSHHTPSISDDKDN) are enriched in basic and acidic residues. The span at 331 to 347 (ADSSETVGYQSQSTASH) shows a compositional bias: polar residues. Positions 348–364 (RSTEKRNISINDHDKLN) are enriched in basic and acidic residues. Residues 365 to 390 (GQKTNTKTSANNNQKKATSKLNKGRA) show a composition bias toward polar residues. The helical transmembrane segment at 410-430 (LVILMGIIILIVILNAIFNNV) threads the bilayer. Residues His-504, Asp-534, and Ser-619 each act as charge relay system in the active site. Positions 680 to 733 (IASLNSFERQAVKLPGKVKNGVVVDQVDNNGLADQSGLKKGDVITELDGKLLED) constitute a PDZ domain.

The protein belongs to the peptidase S1C family.

It localises to the cell membrane. The protein is Serine protease HtrA-like of Staphylococcus aureus (strain N315).